The chain runs to 121 residues: MRVEETEVFKKYFKNLTDRERAVFEGGITLGALFHQFVGTPVSKYNKESLERAIEEAMKNQPCVYDIKVKIRNVGEKYVSLDGKMLDVDLKIKINKTVAHLKLEYIPEIDYPLMYVKKFEE.

2 residues coordinate substrate: E25 and M114.

It belongs to the archaeal dihydroneopterin aldolase family. Homotetramer.

The catalysed reaction is 7,8-dihydroneopterin = 6-hydroxymethyl-7,8-dihydropterin + glycolaldehyde. It functions in the pathway cofactor biosynthesis; 5,6,7,8-tetrahydromethanopterin biosynthesis. Catalyzes the conversion of 7,8-dihydroneopterin (H2Neo) to 6-hydroxymethyl-7,8-dihydropterin (6-HMD). The protein is Dihydroneopterin aldolase of Methanocaldococcus jannaschii (strain ATCC 43067 / DSM 2661 / JAL-1 / JCM 10045 / NBRC 100440) (Methanococcus jannaschii).